Reading from the N-terminus, the 222-residue chain is Thiopurine S-methyltransferase (222 aa).

The S-adenosyl-L-methionine site is built by Trp10, Leu45, Glu66, and Arg124.

It belongs to the class I-like SAM-binding methyltransferase superfamily. TPMT family.

It is found in the cytoplasm. The catalysed reaction is S-adenosyl-L-methionine + a thiopurine = S-adenosyl-L-homocysteine + a thiopurine S-methylether.. This chain is Thiopurine S-methyltransferase, found in Methylococcus capsulatus (strain ATCC 33009 / NCIMB 11132 / Bath).